A 250-amino-acid polypeptide reads, in one-letter code: Pre-protein VI (250 aa).

Residues M1–G33 constitute a propeptide that is removed on maturation. An amphipathic alpha-helix essential for membrane lytic activity region spans residues A34–Y54. Residues S36 to N53 form an involved in endosomal membrane lysis region. Residues G48 to Q74 form an interaction with hexon protein region. Positions L67–F76 match the Nuclear export signal motif. The disordered stretch occupies residues I103–E147. Residue S124 is modified to Phosphoserine; by host. The segment covering G127 to T140 has biased composition (basic and acidic residues). The Nuclear localization signal signature appears at K131–P135. T143 is subject to Phosphothreonine; by host. A PPXY motif motif is present at residues P148 to Y151. Residues P206–S220 are compositionally biased toward low complexity. A disordered region spans residues P206–S226. The short motif at S231 to Q242 is the Nuclear export signal element. The segment at L233–L239 is interaction with hexon protein. Positions G240–F250 are binds to importin alpha/beta, involved in hexon nuclear import. Residues K245–R248 carry the Nuclear localization signal motif.

It belongs to the adenoviridae protein VI family. Interacts with hexon protein; this interaction allows nuclear import of hexon trimers and possibly pre-capsid assembly. Interacts (via C-terminal NLS) with importin alpha/beta. In terms of assembly, interacts (via PPxY motif) with host NEDD4 ubiquitine ligase; this interaction might play a role in virus intracellular transport during entry. Part of a complex composed of the core-capsid bridging protein, the endosome lysis protein VI and the hexon-linking protein VIII; these interactions bridge the virus core to the capsid. Interacts with peripentonal hexons; this interaction stabilizes the capsid by gluing two peripentonal hexons together and joining them with an adjacent group-of-nine hexon. As to quaternary structure, heterodimer with the viral protease; disulfide-linked. Interacts with the viral protease. In terms of processing, ubiquitinated by Nedd4 following partial capsid disassembly; which might play a role in intracellular virus movement during entry. Post-translationally, contains the major nuclear import and export signals. Proteolytically removed during virion maturation. The processing of the C-terminus turns the precursor into a mature viral structural protein and abrogates its ability to promote hexon import and act as a potential chaperone protein.

It is found in the host nucleus. The protein resides in the host cytoplasm. It localises to the virion. During virus assembly, promotes hexon trimers nuclear import through nuclear pore complexes via an importin alpha/beta-dependent mechanism. By analogy to herpesviruses capsid assembly, might act as a chaperone to promote the formation of the icosahedral capsid. In terms of biological role, structural component of the virion that provides increased stability to the particle shell through its interaction with the core-capsid bridging protein and the hexon-linking protein VIII. Fibers shedding during virus entry into host cell allows the endosome lysis protein to be exposed as a membrane-lytic peptide. Exhibits pH-independent membrane fragmentation activity and probably mediates viral rapid escape from host endosome via organellar membrane lysis. It is not clear if it then remains partially associated with the capsid and involved in the intracellular microtubule-dependent transport of capsid to the nucleus, or if it is lost during endosomal penetration. Its function is as follows. Cofactor that activates the viral protease. Binds to viral protease in a 1:1 ratio. The chain is Pre-protein VI from Human adenovirus C serotype 2 (HAdV-2).